Here is a 65-residue protein sequence, read N- to C-terminus: MDSQRTVELTNPRGRSKERGDSGGKQKNSMGRKIANDAISESKQGVMGASTYIADKIKVTINFNF.

Positions M1–E41 are disordered. Basic and acidic residues predominate over residues R15–G24. Residues K17–K43 form an RNA-binding region.

The protein belongs to the carmovirus double gene block protein 1 family. As to quaternary structure, homodimer.

Cell-to-cell movement. Displays RNA-binding activity. The sequence is that of Double gene block protein 1 from Melon necrotic spot virus (MNSV).